We begin with the raw amino-acid sequence, 485 residues long: Terminase, large subunit (485 aa).

ADP-binding positions include 17-22, 40-45, and arginine 79; these read KPHHVQ and QSGKSE. An ATPase activity region spans residues 22–197; the sequence is QLAIHRSTAK…EFFLMGWRGG (176 aa). Residues glutamine 97 and glutamine 99 each coordinate ATP. The Walker A motif motif lies at 125–131; the sequence is SEFRGKS. Positions 145 to 150 match the Walker B motif motif; sequence FVILDE. Catalysis depends on glutamate 150, which acts as the For ATPase activity. The interval 256 to 438 is nuclease; that stretch reads SNSVFSGLDM…DIVMSLALAY (183 aa). 3 residues coordinate Mg(2+): aspartate 294, aspartate 347, and aspartate 429.

The protein belongs to the Tequatrovirus large terminase family. Interacts with the terminase small subunit; the active complex is composed of a pentamer of terminase large subunits and a dodecamer of terminase small subunits. Interacts with the portal protein. Mg(2+) is required as a cofactor.

Its function is as follows. The terminase large subunit acts as an ATP driven molecular motor necessary for viral DNA translocation into empty capsids and as an endonuclease that cuts the viral genome to initiate and to end a packaging reaction The terminase lies at a unique vertex of the procapsid and is composed of two subunits, a small terminase subunit involved in viral DNA recognition (packaging sequence), and a large terminase subunit possessing endonucleolytic and ATPase activities. Both terminase subunits heterooligomerize and are docked on the portal protein to form the packaging machine. The terminase large subunit exhibits endonuclease activity and cleaves the viral genome concatemer. Once the capsid is packaged with the DNA, the terminase complex is substituted by the tail. This chain is Terminase, large subunit, found in Thermus thermophilus (Thermus thermophilus phage P23-45).